A 357-amino-acid polypeptide reads, in one-letter code: Cinnamyl alcohol dehydrogenase 7 (357 aa).

A Zn(2+)-binding site is contributed by C46. T48 is an NADP(+) binding site. The Zn(2+) site is built by H68, E69, C99, C102, C105, C113, and C162. NADP(+) contacts are provided by residues T166, 187–192 (GLGGLG), 210–215 (STSERK), T250, G274, and 297–299 (SMV).

Belongs to the zinc-containing alcohol dehydrogenase family. As to quaternary structure, homodimer. The cofactor is Zn(2+). Expressed in the differentiation and elongation zones of primary and lateral roots. Expressed in the hypocotyl, cotyledon and leaf veins, hydathodes and trichomes. In stems, expressed in the vascular cambium region. Expressed in the style, anthers, stamen filaments, vascular tissues of sepals and stigmatic regions in flowers, and abscission, style and stigmatic regions of siliques and seed testa.

It carries out the reaction (E)-cinnamyl alcohol + NADP(+) = (E)-cinnamaldehyde + NADPH + H(+). It functions in the pathway aromatic compound metabolism; phenylpropanoid biosynthesis. Involved in lignin biosynthesis. Catalyzes the final step specific for the production of lignin monomers. Catalyzes the NADPH-dependent reduction of coniferaldehyde, 5-hydroxyconiferaldehyde, sinapaldehyde, 4-coumaraldehyde and caffeyl aldehyde to their respective alcohols. This chain is Cinnamyl alcohol dehydrogenase 7 (CAD7), found in Arabidopsis thaliana (Mouse-ear cress).